We begin with the raw amino-acid sequence, 436 residues long: tRNA-2-methylthio-N(6)-dimethylallyladenosine synthase (436 aa).

The MTTase N-terminal domain occupies 5 to 120; the sequence is KKLFIQTLGC…IKDVVDVKGA (116 aa). C14, C51, C83, C152, C156, and C159 together coordinate [4Fe-4S] cluster. A Radical SAM core domain is found at 138–372; that stretch reads KTNKYRASVN…IELHKRYLEE (235 aa). The TRAM domain occupies 375–436; sequence PKLIGETLNI…RTSLKGEVVN (62 aa).

The protein belongs to the methylthiotransferase family. MiaB subfamily. As to quaternary structure, monomer. [4Fe-4S] cluster is required as a cofactor.

It is found in the cytoplasm. It carries out the reaction N(6)-dimethylallyladenosine(37) in tRNA + (sulfur carrier)-SH + AH2 + 2 S-adenosyl-L-methionine = 2-methylsulfanyl-N(6)-dimethylallyladenosine(37) in tRNA + (sulfur carrier)-H + 5'-deoxyadenosine + L-methionine + A + S-adenosyl-L-homocysteine + 2 H(+). In terms of biological role, catalyzes the methylthiolation of N6-(dimethylallyl)adenosine (i(6)A), leading to the formation of 2-methylthio-N6-(dimethylallyl)adenosine (ms(2)i(6)A) at position 37 in tRNAs that read codons beginning with uridine. This is tRNA-2-methylthio-N(6)-dimethylallyladenosine synthase from Aliarcobacter butzleri (strain RM4018) (Arcobacter butzleri).